Reading from the N-terminus, the 500-residue chain is Probable betaine aldehyde dehydrogenase (500 aa).

Glycine 249–glycine 254 contributes to the NAD(+) binding site. Glutamate 271 acts as the Proton acceptor in catalysis. Cysteine 305 acts as the Nucleophile in catalysis.

It belongs to the aldehyde dehydrogenase family.

It catalyses the reaction betaine aldehyde + NAD(+) + H2O = glycine betaine + NADH + 2 H(+). The protein operates within amine and polyamine biosynthesis; betaine biosynthesis via choline pathway; betaine from betaine aldehyde: step 1/1. This Schizosaccharomyces pombe (strain 972 / ATCC 24843) (Fission yeast) protein is Probable betaine aldehyde dehydrogenase (meu8).